The chain runs to 164 residues: Phosphopantetheine adenylyltransferase (164 aa).

T10 provides a ligand contact to substrate. ATP is bound by residues 10–11 and H18; that span reads TF. 3 residues coordinate substrate: K42, L74, and R88. ATP contacts are provided by residues 89-91, E99, and 124-130; these read GIR and YAFVSST.

This sequence belongs to the bacterial CoaD family. Homohexamer. Mg(2+) is required as a cofactor.

The protein resides in the cytoplasm. It carries out the reaction (R)-4'-phosphopantetheine + ATP + H(+) = 3'-dephospho-CoA + diphosphate. It functions in the pathway cofactor biosynthesis; coenzyme A biosynthesis; CoA from (R)-pantothenate: step 4/5. Functionally, reversibly transfers an adenylyl group from ATP to 4'-phosphopantetheine, yielding dephospho-CoA (dPCoA) and pyrophosphate. This is Phosphopantetheine adenylyltransferase from Tolumonas auensis (strain DSM 9187 / NBRC 110442 / TA 4).